The following is a 507-amino-acid chain: MAEEQAYHVSKGLECLKALRENPPDIEEIQEVSSLRDQTCNPGQENGTTGMQEEEDSQNLDESHEPTKGSNYVGHVPQNNPGCGERNTALVEAERPPREDIQPGPGIRCDHVYDHSGEEVKGIEDADSLVVPAGTVGNRGFERGEGSLDDSTEDSGEDYSEGNASSNWGYSFGLKPDRAADVSMLMEEELSALLRTSRNVGIQKRDGKTLQFPHNPEVRQGIRSVDPLKRGTEERSVSHGMGIVAGSTSGATQSALKSTGGSSEPSVSAGNVRQPAMNAKMTQKCKLESGTQLPPRTSNEAESDSEYDDELFSEIQEIRSAITKLTEDNQAILTKLDTLLLLKGETDSIKKQISKQNIAISTIEGHLSSIMIAIPGFGKDTGDPTANVDINPELRPIIGRDSGRPLAEVLKQPASSRGNRKDSGITLGSKGQLLRDLQLKPIDKESSSAIGYKPKDTAPSKAVLASLIRSSRVDQSHKHNMLALLKNIKGDDNLNEFYQMVKSITHA.

Positions 31–51 are enriched in polar residues; that stretch reads EVSSLRDQTCNPGQENGTTGM. Disordered regions lie at residues 31-86, 123-172, and 242-307; these read EVSS…CGER, IEDA…GYSF, and GIVA…DSEY. Residues 147–160 show a composition bias toward acidic residues; that stretch reads SLDDSTEDSGEDYS. S151 bears the Phosphoserine mark. 2 stretches are compositionally biased toward polar residues: residues 246–271 and 289–300; these read GSTS…SAGN and SGTQLPPRTSNE. Positions 304–376 are multimerization; the sequence is DSEYDDELFS…LSSIMIAIPG (73 aa). Residues 310–339 are a coiled coil; the sequence is ELFSEIQEIRSAITKLTEDNQAILTKLDTL. Positions 459–507 are interaction with the nucleocapsid (N-RNA); that stretch reads PSKAVLASLIRSSRVDQSHKHNMLALLKNIKGDDNLNEFYQMVKSITHA.

It belongs to the morbillivirus P protein family. In terms of assembly, homotetramer. Interacts (via multimerization domain) with polymerase L; this interaction forms the polymerase L-P complex. Interacts (via N-terminus) with N0 (via Ncore); this interaction allows P to chaperon N0 to avoid N polymerization before encapsidation. Interacts (via C-terminus) with N-RNA template; this interaction positions the polymerase on the template for both transcription and replication. Post-translationally, phosphorylation on serines by host CK2 is necessary for the formation of viral factories.

In terms of biological role, essential cofactor of the RNA polymerase L that plays a central role in the transcription and replication by forming the polymerase complex with RNA polymerase L and recruiting L to the genomic N-RNA template for RNA synthesis. Also plays a central role in the encapsidation of nascent RNA chains by forming the encapsidation complex with the nucleocapsid protein N (N-P complex). Acts as a chaperone for newly synthesized free N protein, so-called N0, allowing encapsidation of nascent RNA chains during replication. The nucleoprotein protein N prevents excessive phosphorylation of P, which leads to down-regulation of viral transcription/ replication. Participates, together with N, in the formation of viral factories (viroplasms), which are large inclusions in the host cytoplasm where replication takes place. This Canine distemper virus (strain Onderstepoort) (CDV) protein is Phosphoprotein (P/V).